The primary structure comprises 35 residues: Augerpeptide hheTx5 (35 aa).

In terms of processing, contains 4 disulfide bonds. Expressed by the venom duct.

It is found in the secreted. This chain is Augerpeptide hheTx5, found in Hastula hectica (Sea snail).